The primary structure comprises 499 residues: Glycerol kinase (499 aa).

Thr-12 provides a ligand contact to ADP. Thr-12, Thr-13, and Ser-14 together coordinate ATP. Sn-glycerol 3-phosphate is bound at residue Thr-12. Arg-16 lines the ADP pocket. The sn-glycerol 3-phosphate site is built by Arg-82, Glu-83, Tyr-135, and Asp-245. The glycerol site is built by Arg-82, Glu-83, Tyr-135, Asp-245, and Gln-246. 2 residues coordinate ADP: Thr-267 and Gly-310. Thr-267, Gly-310, Gln-314, and Gly-411 together coordinate ATP. ADP is bound by residues Gly-411 and Asn-415.

This sequence belongs to the FGGY kinase family. In terms of assembly, homotetramer and homodimer (in equilibrium).

The enzyme catalyses glycerol + ATP = sn-glycerol 3-phosphate + ADP + H(+). Its pathway is polyol metabolism; glycerol degradation via glycerol kinase pathway; sn-glycerol 3-phosphate from glycerol: step 1/1. With respect to regulation, activated by phosphorylation and inhibited by fructose 1,6-bisphosphate (FBP). Functionally, key enzyme in the regulation of glycerol uptake and metabolism. Catalyzes the phosphorylation of glycerol to yield sn-glycerol 3-phosphate. In Clostridium beijerinckii (strain ATCC 51743 / NCIMB 8052) (Clostridium acetobutylicum), this protein is Glycerol kinase.